Here is a 93-residue protein sequence, read N- to C-terminus: Integration host factor subunit beta (93 aa).

This sequence belongs to the bacterial histone-like protein family. In terms of assembly, heterodimer of an alpha and a beta chain.

In terms of biological role, this protein is one of the two subunits of integration host factor, a specific DNA-binding protein that functions in genetic recombination as well as in transcriptional and translational control. In Aliivibrio salmonicida (strain LFI1238) (Vibrio salmonicida (strain LFI1238)), this protein is Integration host factor subunit beta.